The primary structure comprises 2595 residues: Glucosylceramide transporter ABCA12 (2595 aa).

The helical transmembrane segment at 23-43 threads the bilayer; it reads PLWTLVLILWPVIIFIILAIT. A compositionally biased stretch (basic and acidic residues) spans 109–119; sequence LKKPSNPKRDS. Positions 109–143 are disordered; sequence LKKPSNPKRDSNLSLRSTQVPERSHTSLATVPPRP. N-linked (GlcNAc...) asparagine glycans are attached at residues Asn120, Asn156, Asn174, Asn214, Asn275, Asn331, Asn365, Asn381, Asn410, Asn433, Asn455, Asn526, Asn541, Asn574, Asn605, Asn645, Asn749, Asn773, Asn812, Asn823, Asn854, Asn917, and Asn960. Residues 120–137 show a composition bias toward polar residues; sequence NLSLRSTQVPERSHTSLA. A run of 3 helical transmembrane segments spans residues 1062 to 1082, 1109 to 1129, and 1142 to 1162; these read VSYS…AAFV, FAWL…LIVI, and FILF…SYLI. Asn1167 carries N-linked (GlcNAc...) asparagine glycosylation. The next 3 membrane-spanning stretches (helical) occupy residues 1171–1191, 1197–1217, and 1247–1267; these read IAAL…IVLV, LSYV…SYAS, and FGWL…IAWY. Asn1319 carries N-linked (GlcNAc...) asparagine glycosylation. Residues 1346 to 1577 form the ABC transporter 1 domain; that stretch reads VALHGVTKIY…FGDGYHLTLT (232 aa). Position 1378 to 1385 (1378 to 1385) interacts with ATP; sequence GPNGAGKT. 6 N-linked (GlcNAc...) asparagine glycosylation sites follow: Asn1524, Asn1663, Asn1673, Asn1686, Asn1690, and Asn1704. The tract at residues 1672–1703 is disordered; sequence SNMSLEHLTQRKVGNPSANGTSTPDDLSVSSS. The span at 1687 to 1703 shows a compositional bias: polar residues; it reads PSANGTSTPDDLSVSSS. The helical transmembrane segment at 1747 to 1767 threads the bilayer; it reads LIAQVILPIVFVATAMGLGTL. Asn1819, Asn1835, Asn1876, Asn1921, and Asn1952 each carry an N-linked (GlcNAc...) asparagine glycan. 7 helical membrane-spanning segments follow: residues 1979 to 1999, 2035 to 2055, 2072 to 2092, 2103 to 2123, 2143 to 2163, 2187 to 2207, and 2270 to 2290; these read ATIS…GYSV, FIYD…VIAI, LLLL…AGLF, VCVN…VYFL, IFLI…SQQQ, GAMF…RLLI, and IIAV…GLLG. Residues 2254 to 2489 enclose the ABC transporter 2 domain; that stretch reads VQLHRLTKTY…FGRGFTVKVH (236 aa). 2290-2297 provides a ligand contact to ATP; that stretch reads GVNGAGKT. N-linked (GlcNAc...) asparagine glycosylation is found at Asn2318, Asn2542, and Asn2547. A compositionally biased stretch (polar residues) spans 2575-2587; sequence VDTSSQGSTISVD. Residues 2575 to 2595 are disordered; the sequence is VDTSSQGSTISVDSQEDQLDS.

This sequence belongs to the ABC transporter superfamily. ABCA family. Interacts with NR1H2 and ABCA1; this interaction is required for ABCA1 localization to the cell surface and is necessary for its normal activity and stability. As to expression, expressed in a number of other tissues besides skin, including heart, intestine, stomach, and kidney. Expressed mainly in the granular layer of the skin. Expressed in lung. Expressed in alpha and beta cells of pancreatic islets.

The protein localises to the cytoplasmic vesicle. It localises to the secretory vesicle membrane. Its subcellular location is the golgi apparatus membrane. It carries out the reaction ATP + H2O + phospholipidSide 1 = ADP + phosphate + phospholipidSide 2.. It catalyses the reaction a beta-D-glucosylceramide(in) + ATP + H2O = a beta-D-glucosylceramide(out) + ADP + phosphate + H(+). Functionally, transports lipids such as glucosylceramides from the outer to the inner leaflet of lamellar granules (LGs) membrane, whereby the lipids are finally transported to the keratinocyte periphery via the trans-Golgi network and LGs and released to the apical surface of the granular keratinocytes to form lipid lamellae in the stratum corneum of the epidermis, which is essential for skin barrier function. In the meantime, participates in the transport of the lamellar granules-associated proteolytic enzymes, in turn regulates desquamation and keratinocyte differentiation. Furthermore, is essential for the regulation of cellular cholesterol homeostasis by regulating ABCA1-dependent cholesterol efflux from macrophages through interaction with NR1H2 and ABCA1. Plays pleiotropic roles in regulating glucose stimulated insulin secretion from beta cells, regulating the morphology and fusion of insulin granules, lipid raft abundance and the actin cytoskeleton. Also involved in lung surfactant biogenesis. This Mus musculus (Mouse) protein is Glucosylceramide transporter ABCA12.